A 340-amino-acid polypeptide reads, in one-letter code: E3 ubiquitin ligase BIG BROTHER-related (340 aa).

2 disordered regions span residues 1-56 (MPME…GVGE) and 133-182 (YDED…GNSD). Positions 34–46 (NRQTGVVSDTGSG) are enriched in polar residues. Composition is skewed to acidic residues over residues 133 to 164 (YDEDEFDDPENEDEDDDEDEYETDDDPQEDGL) and 173 to 182 (DDQEDDGNSD). The RING-type; atypical zinc-finger motif lies at 288-329 (CVICRLDYEDDEDLILLPCKHSYHSECINNWLKINKVCPVCS).

Auto-ubiquitinated.

It catalyses the reaction S-ubiquitinyl-[E2 ubiquitin-conjugating enzyme]-L-cysteine + [acceptor protein]-L-lysine = [E2 ubiquitin-conjugating enzyme]-L-cysteine + N(6)-ubiquitinyl-[acceptor protein]-L-lysine.. Its pathway is protein modification; protein ubiquitination. Its function is as follows. E3 ubiquitin-ligase probably involved in organ size regulation. The protein is E3 ubiquitin ligase BIG BROTHER-related (BBR) of Arabidopsis thaliana (Mouse-ear cress).